We begin with the raw amino-acid sequence, 329 residues long: Lipoyl synthase (329 aa).

Cys55, Cys60, Cys66, Cys81, Cys85, Cys88, and Ser292 together coordinate [4Fe-4S] cluster. The 215-residue stretch at 67–281 (WEDREATFLI…RDEAEAIGFL (215 aa)) folds into the Radical SAM core domain.

This sequence belongs to the radical SAM superfamily. Lipoyl synthase family. The cofactor is [4Fe-4S] cluster.

The protein localises to the cytoplasm. It carries out the reaction [[Fe-S] cluster scaffold protein carrying a second [4Fe-4S](2+) cluster] + N(6)-octanoyl-L-lysyl-[protein] + 2 oxidized [2Fe-2S]-[ferredoxin] + 2 S-adenosyl-L-methionine + 4 H(+) = [[Fe-S] cluster scaffold protein] + N(6)-[(R)-dihydrolipoyl]-L-lysyl-[protein] + 4 Fe(3+) + 2 hydrogen sulfide + 2 5'-deoxyadenosine + 2 L-methionine + 2 reduced [2Fe-2S]-[ferredoxin]. It participates in protein modification; protein lipoylation via endogenous pathway; protein N(6)-(lipoyl)lysine from octanoyl-[acyl-carrier-protein]: step 2/2. Functionally, catalyzes the radical-mediated insertion of two sulfur atoms into the C-6 and C-8 positions of the octanoyl moiety bound to the lipoyl domains of lipoate-dependent enzymes, thereby converting the octanoylated domains into lipoylated derivatives. This is Lipoyl synthase from Leifsonia xyli subsp. xyli (strain CTCB07).